The chain runs to 231 residues: tRNA (guanine-N(1)-)-methyltransferase (231 aa).

S-adenosyl-L-methionine is bound by residues Gly-111 and 131 to 136 (LGNYVL).

This sequence belongs to the RNA methyltransferase TrmD family. In terms of assembly, homodimer.

The protein resides in the cytoplasm. The enzyme catalyses guanosine(37) in tRNA + S-adenosyl-L-methionine = N(1)-methylguanosine(37) in tRNA + S-adenosyl-L-homocysteine + H(+). Specifically methylates guanosine-37 in various tRNAs. This chain is tRNA (guanine-N(1)-)-methyltransferase, found in Leptospira interrogans serogroup Icterohaemorrhagiae serovar copenhageni (strain Fiocruz L1-130).